The sequence spans 348 residues: Small ribosomal subunit biogenesis GTPase RsgA (348 aa).

A compositionally biased stretch (basic residues) spans 1–14; that stretch reads MAKRKLSKQQKWRI. The disordered stretch occupies residues 1 to 39; sequence MAKRKLSKQQKWRIQKIQDERTKRATRKETQLESQLSGG. A compositionally biased stretch (basic and acidic residues) spans 16–31; it reads KIQDERTKRATRKETQ. The region spanning 116–275 is the CP-type G domain; the sequence is FGQLKPIAAN…LIDSPGIREF (160 aa). GTP contacts are provided by residues 163-166 and 217-225; these read NKQD and GQSGVGKSS. Zn(2+) is bound by residues C299, C304, H306, and C312.

The protein belongs to the TRAFAC class YlqF/YawG GTPase family. RsgA subfamily. As to quaternary structure, monomer. Associates with 30S ribosomal subunit, binds 16S rRNA. The cofactor is Zn(2+).

It localises to the cytoplasm. Its function is as follows. One of several proteins that assist in the late maturation steps of the functional core of the 30S ribosomal subunit. Helps release RbfA from mature subunits. May play a role in the assembly of ribosomal proteins into the subunit. Circularly permuted GTPase that catalyzes slow GTP hydrolysis, GTPase activity is stimulated by the 30S ribosomal subunit. The sequence is that of Small ribosomal subunit biogenesis GTPase RsgA from Hahella chejuensis (strain KCTC 2396).